The primary structure comprises 322 residues: Acetyl-coenzyme A carboxylase carboxyl transferase subunit alpha 2 (322 aa).

The 258-residue stretch at 37 to 294 (EINRLSARSE…KRVLQESLRN (258 aa)) folds into the CoA carboxyltransferase C-terminal domain.

This sequence belongs to the AccA family. In terms of assembly, acetyl-CoA carboxylase is a heterohexamer composed of biotin carboxyl carrier protein (AccB), biotin carboxylase (AccC) and two subunits each of ACCase subunit alpha (AccA) and ACCase subunit beta (AccD).

The protein resides in the cytoplasm. It catalyses the reaction N(6)-carboxybiotinyl-L-lysyl-[protein] + acetyl-CoA = N(6)-biotinyl-L-lysyl-[protein] + malonyl-CoA. It functions in the pathway lipid metabolism; malonyl-CoA biosynthesis; malonyl-CoA from acetyl-CoA: step 1/1. Component of the acetyl coenzyme A carboxylase (ACC) complex. First, biotin carboxylase catalyzes the carboxylation of biotin on its carrier protein (BCCP) and then the CO(2) group is transferred by the carboxyltransferase to acetyl-CoA to form malonyl-CoA. Functionally, confers resistance to the endogenous polyketide antibiotic thailandamide. Can replace the endogenous gene in S.typhimurium, conferring slow growth and resistance to thailandamide. Can also replace the endogenous gene in E.coli, conferring resistance to thailandamide. In Burkholderia thailandensis (strain ATCC 700388 / DSM 13276 / CCUG 48851 / CIP 106301 / E264), this protein is Acetyl-coenzyme A carboxylase carboxyl transferase subunit alpha 2.